The sequence spans 509 residues: Dihydrolipoyl dehydrogenase, mitochondrial (509 aa).

Residues 1–35 (MQSWSRVYCSLAKRGHFNRISHGLQGLSAVPLRTY) constitute a mitochondrion transit peptide. An N6-acetyllysine; alternate modification is found at Lys-66. Residue Lys-66 is modified to N6-succinyllysine; alternate. FAD contacts are provided by residues 71-80 (EKNETLGGTC) and Lys-89. An intrachain disulfide couples Cys-80 to Cys-85. N6-acetyllysine; alternate is present on residues Lys-104, Lys-122, Lys-132, and Lys-143. 4 positions are modified to N6-succinyllysine; alternate: Lys-104, Lys-122, Lys-132, and Lys-143. Gly-154 serves as a coordination point for FAD. Residues Lys-159 and Lys-166 each carry the N6-succinyllysine modification. 183 to 185 (TGS) lines the FAD pocket. Residues 220–227 (GAGVIGVE) and Glu-243 each bind NAD(+). Residues Lys-273 and Lys-277 each carry the N6-succinyllysine modification. Val-278 contacts NAD(+). Residues Ser-285 and Ser-297 each carry the phosphoserine modification. Gly-314 contributes to the NAD(+) binding site. Position 346 is an N6-acetyllysine (Lys-346). FAD contacts are provided by residues Asp-355 and 361–364 (MLAH). Lys-410 is modified (N6-acetyllysine; alternate). The residue at position 410 (Lys-410) is an N6-succinyllysine; alternate. 2 positions are modified to N6-acetyllysine: Lys-417 and Lys-420. N6-succinyllysine is present on Lys-430. His-487 serves as the catalytic Proton acceptor. Ser-502 is modified (phosphoserine). Lys-505 is subject to N6-acetyllysine; alternate. At Lys-505 the chain carries N6-succinyllysine; alternate.

Belongs to the class-I pyridine nucleotide-disulfide oxidoreductase family. In terms of assembly, homodimer. Part of the multimeric pyruvate dehydrogenase complex that contains multiple copies of pyruvate dehydrogenase (subunits PDHA (PDHA1 or PDHA2) and PDHB, E1), dihydrolipoamide acetyltransferase (DLAT, E2) and lipoamide dehydrogenase (DLD, E3). These subunits are bound to an inner core composed of about 48 DLAT and 12 PDHX molecules (by non covalent bonds). The 2-oxoglutarate dehydrogenase complex is composed of OGDH (2-oxoglutarate dehydrogenase; E1), DLST (dihydrolipoamide succinyltransferase; E2), DLD (dihydrolipoamide dehydrogenase; E3) and the assembly factor KGD4. It contains multiple copies of the three enzymatic components (E1, E2 and E3). In the nucleus, the 2-oxoglutarate dehydrogenase complex associates with KAT2A. Interacts with PDHX. It depends on FAD as a cofactor. Tyrosine phosphorylated.

The protein localises to the mitochondrion matrix. The protein resides in the nucleus. It localises to the cell projection. It is found in the cilium. Its subcellular location is the flagellum. The protein localises to the cytoplasmic vesicle. The protein resides in the secretory vesicle. It localises to the acrosome. It catalyses the reaction N(6)-[(R)-dihydrolipoyl]-L-lysyl-[protein] + NAD(+) = N(6)-[(R)-lipoyl]-L-lysyl-[protein] + NADH + H(+). Its function is as follows. Lipoamide dehydrogenase is a component of the glycine cleavage system as well as an E3 component of three alpha-ketoacid dehydrogenase complexes (pyruvate-, alpha-ketoglutarate-, and branched-chain amino acid-dehydrogenase complex). The 2-oxoglutarate dehydrogenase complex is mainly active in the mitochondrion. A fraction of the 2-oxoglutarate dehydrogenase complex also localizes in the nucleus and is required for lysine succinylation of histones: associates with KAT2A on chromatin and provides succinyl-CoA to histone succinyltransferase KAT2A. In monomeric form may have additional moonlighting function as serine protease. Involved in the hyperactivation of spermatazoa during capacitation and in the spermatazoal acrosome reaction. This Pongo abelii (Sumatran orangutan) protein is Dihydrolipoyl dehydrogenase, mitochondrial (DLD).